Here is a 574-residue protein sequence, read N- to C-terminus: K(+)/H(+) antiporter NhaP2 (574 aa).

A run of 13 helical transmembrane segments spans residues 6–26 (INSF…LSPV), 34–54 (ILLI…GGIL), 58–78 (YSTA…DGGM), 87–107 (VALW…TSIT), 109–129 (VMAA…GAIV), 173–193 (IAIL…ISFI), 196–216 (FGLG…LVNL), 219–239 (LAEG…YAAS), 242–262 (LGGS…NKPT), 271–291 (VLDG…GLLL), 299–319 (IWLP…PLAV), 335–355 (WFIS…VFPM), and 359–379 (LPGA…SLLV). The 82-residue stretch at 405–486 (SGVEIYPSSE…LEALSNLFSQ (82 aa)) folds into the RCK C-terminal domain.

The protein belongs to the monovalent cation:proton antiporter 1 (CPA1) transporter (TC 2.A.36) family. NhaP2 subfamily.

The protein resides in the cell inner membrane. It carries out the reaction K(+)(in) + H(+)(out) = K(+)(out) + H(+)(in). Its function is as follows. K(+)/H(+) antiporter that extrudes potassium in exchange for external protons and maintains the internal concentration of potassium under toxic levels. The polypeptide is K(+)/H(+) antiporter NhaP2 (Shewanella sp. (strain ANA-3)).